Reading from the N-terminus, the 373-residue chain is Dual-specificity RNA methyltransferase RlmN (373 aa).

Catalysis depends on E94, which acts as the Proton acceptor. Residues 100-339 (EADRATLCVS…VIVRKTRGDD (240 aa)) form the Radical SAM core domain. Cysteines 107 and 344 form a disulfide. C114, C118, and C121 together coordinate [4Fe-4S] cluster. S-adenosyl-L-methionine-binding positions include 168–169 (GE), S200, 222–224 (SLH), and N301. The S-methylcysteine intermediate role is filled by C344.

The protein belongs to the radical SAM superfamily. RlmN family. [4Fe-4S] cluster is required as a cofactor.

The protein resides in the cytoplasm. It carries out the reaction adenosine(2503) in 23S rRNA + 2 reduced [2Fe-2S]-[ferredoxin] + 2 S-adenosyl-L-methionine = 2-methyladenosine(2503) in 23S rRNA + 5'-deoxyadenosine + L-methionine + 2 oxidized [2Fe-2S]-[ferredoxin] + S-adenosyl-L-homocysteine. The catalysed reaction is adenosine(37) in tRNA + 2 reduced [2Fe-2S]-[ferredoxin] + 2 S-adenosyl-L-methionine = 2-methyladenosine(37) in tRNA + 5'-deoxyadenosine + L-methionine + 2 oxidized [2Fe-2S]-[ferredoxin] + S-adenosyl-L-homocysteine. In terms of biological role, specifically methylates position 2 of adenine 2503 in 23S rRNA and position 2 of adenine 37 in tRNAs. m2A2503 modification seems to play a crucial role in the proofreading step occurring at the peptidyl transferase center and thus would serve to optimize ribosomal fidelity. In Tolumonas auensis (strain DSM 9187 / NBRC 110442 / TA 4), this protein is Dual-specificity RNA methyltransferase RlmN.